A 454-amino-acid chain; its full sequence is tRNA modification GTPase MnmE (454 aa).

(6S)-5-formyl-5,6,7,8-tetrahydrofolate is bound by residues R23, E80, and K120. Positions G216–G377 constitute a TrmE-type G domain. N226 contacts K(+). GTP-binding positions include N226–S231, T245–T251, D270–G273, N335–D338, and S358–R360. S230 lines the Mg(2+) pocket. Residues T245, I247, and T250 each coordinate K(+). Residue T251 participates in Mg(2+) binding. K454 contacts (6S)-5-formyl-5,6,7,8-tetrahydrofolate.

This sequence belongs to the TRAFAC class TrmE-Era-EngA-EngB-Septin-like GTPase superfamily. TrmE GTPase family. As to quaternary structure, homodimer. Heterotetramer of two MnmE and two MnmG subunits. It depends on K(+) as a cofactor.

It localises to the cytoplasm. Functionally, exhibits a very high intrinsic GTPase hydrolysis rate. Involved in the addition of a carboxymethylaminomethyl (cmnm) group at the wobble position (U34) of certain tRNAs, forming tRNA-cmnm(5)s(2)U34. This chain is tRNA modification GTPase MnmE, found in Escherichia coli O7:K1 (strain IAI39 / ExPEC).